A 263-amino-acid polypeptide reads, in one-letter code: Hemophilin (263 aa).

The N-terminal stretch at 1 to 20 is a signal peptide; the sequence is MKISQLFLGLVACSTAFAYA. Heme b is bound by residues His-42, Tyr-58, Ser-104, and His-105.

Monomer in solution. Interacts with host hemoglobin.

The protein resides in the secreted. Part of a high affinity heme acquisition system. Functions as a hemophore that acquires heme from human hemoglobin and delivers the heme to its cognate receptor, HphR, facilitating transport of heme across the bacterial outer membrane. Apo HphA interacts specifically with human hemoglobin and steals heme through a passive process probably due to its high affinity for heme. It can also acquire heme complexed to human serum albumin. Plays a supporting role for full virulence, acting as an accessory factor that enhances the process of heme uptake. The polypeptide is Hemophilin (Acinetobacter baumannii).